The following is an 88-amino-acid chain: Alkene monooxygenase system, oxygenase component subunit gamma (88 aa).

Belongs to the TmoB/XamoB family. As to quaternary structure, the alkene monooxygenase multicomponent enzyme system is composed of an electron transfer component and a monooxygenase component interacting with the effector protein XamoD. The electron transfer component is composed of a ferredoxin reductase (XamoF) and a ferredoxin (XamoC), and the monooxygenase component is formed by a heterohexamer (dimer of heterotrimers) of two alpha subunits (XamoA), two beta subunits (XamoE) and two gamma subunits (XamoB).

It is found in the cytoplasm. It carries out the reaction propene + NADH + O2 + H(+) = 1,2-epoxypropane + NAD(+) + H2O. Its activity is regulated as follows. Inhibited by propyne. Functionally, component of the alkene monooxygenase multicomponent enzyme system which catalyzes the O2- and NADH-dependent epoxidation of short chain (C2 to C6) alkenes to their corresponding epoxides. Also able to catalyze the oxidation of a number of chlorinated alkenes, including trichloroethylene, cis- and trans-1,2-dichloroethylene, vinyl chloride, 1-chloropropylene, 1,3-dichloropropylene and 2,3-dichloropropylene. The polypeptide is Alkene monooxygenase system, oxygenase component subunit gamma (Xanthobacter autotrophicus (strain ATCC BAA-1158 / Py2)).